Reading from the N-terminus, the 354-residue chain is Rhodopsin (354 aa).

Topologically, residues M1–A36 are extracellular. N-linked (GlcNAc...) asparagine glycosylation is found at N2 and N15. A helical membrane pass occupies residues F37 to V61. Topologically, residues T62–N73 are cytoplasmic. Residues Y74–Y96 traverse the membrane as a helical segment. At T97–C110 the chain is on the extracellular side. A disulfide bridge links C110 with C187. Residues N111–V133 form a helical membrane-spanning segment. The short motif at E134–W136 is the 'Ionic lock' involved in activated form stabilization element. Residues E134–H152 lie on the Cytoplasmic side of the membrane. Residues A153 to F173 traverse the membrane as a helical segment. Over G174 to S202 the chain is Extracellular. The helical transmembrane segment at F203–G224 threads the bilayer. The Cytoplasmic portion of the chain corresponds to R225–R252. Residues M253–F274 form a helical membrane-spanning segment. Residues I275–V286 lie on the Extracellular side of the membrane. A helical membrane pass occupies residues F287–C308. K296 is subject to N6-(retinylidene)lysine. The Cytoplasmic portion of the chain corresponds to M309 to A354. 2 S-palmitoyl cysteine lipidation sites follow: C322 and C323. The tract at residues G333 to A354 is disordered. A compositionally biased stretch (low complexity) spans A334–A354.

This sequence belongs to the G-protein coupled receptor 1 family. Opsin subfamily. Phosphorylated on some or all of the serine and threonine residues present in the C-terminal region. Post-translationally, contains one covalently linked retinal chromophore.

The protein localises to the membrane. It localises to the cell projection. It is found in the cilium. Its subcellular location is the photoreceptor outer segment. In terms of biological role, photoreceptor required for image-forming vision at low light intensity. While most salt water fish species use retinal as chromophore, most freshwater fish use 3-dehydroretinal, or a mixture of retinal and 3-dehydroretinal. Light-induced isomerization of 11-cis to all-trans retinal triggers a conformational change that activates signaling via G-proteins. Subsequent receptor phosphorylation mediates displacement of the bound G-protein alpha subunit by arrestin and terminates signaling. This Zeus faber (John Dory) protein is Rhodopsin (rho).